A 363-amino-acid chain; its full sequence is Probable methyltransferase-like protein 24 (363 aa).

The first 38 residues, Met1–Ser38, serve as a signal peptide directing secretion. The interval Gly37–Arg62 is disordered.

Belongs to the methyltransferase superfamily.

Its subcellular location is the secreted. Functionally, probable methyltransferase. In Rattus norvegicus (Rat), this protein is Probable methyltransferase-like protein 24 (Mettl24).